The primary structure comprises 904 residues: Leucine--tRNA ligase (904 aa).

The 'HIGH' region signature appears at 49 to 59; sequence PYPSGDLHIGH. Residues 663–667 carry the 'KMSKS' region motif; sequence TMSKS. Lys666 is an ATP binding site.

This sequence belongs to the class-I aminoacyl-tRNA synthetase family.

It is found in the cytoplasm. The enzyme catalyses tRNA(Leu) + L-leucine + ATP = L-leucyl-tRNA(Leu) + AMP + diphosphate. This is Leucine--tRNA ligase from Roseiflexus castenholzii (strain DSM 13941 / HLO8).